The primary structure comprises 65 residues: MAKCAICDKGAHFGKVVSHSRSQVSGRSNKMWKSNVKSVRIKVNGGTQKMYVCTSCLRDGKVERA.

The protein belongs to the bacterial ribosomal protein bL28 family.

This chain is Large ribosomal subunit protein bL28, found in Lachnoclostridium phytofermentans (strain ATCC 700394 / DSM 18823 / ISDg) (Clostridium phytofermentans).